A 354-amino-acid chain; its full sequence is NADH-quinone oxidoreductase subunit H (354 aa).

Helical transmembrane passes span leucine 25–tryptophan 45, tryptophan 91–isoleucine 111, leucine 126–alanine 146, methionine 170–valine 190, phenylalanine 205–isoleucine 225, methionine 253–alanine 273, phenylalanine 290–tryptophan 310, and valine 330–leucine 350.

This sequence belongs to the complex I subunit 1 family. In terms of assembly, NDH-1 is composed of 14 different subunits. Subunits NuoA, H, J, K, L, M, N constitute the membrane sector of the complex.

It is found in the cell inner membrane. It carries out the reaction a quinone + NADH + 5 H(+)(in) = a quinol + NAD(+) + 4 H(+)(out). NDH-1 shuttles electrons from NADH, via FMN and iron-sulfur (Fe-S) centers, to quinones in the respiratory chain. The immediate electron acceptor for the enzyme in this species is believed to be ubiquinone. Couples the redox reaction to proton translocation (for every two electrons transferred, four hydrogen ions are translocated across the cytoplasmic membrane), and thus conserves the redox energy in a proton gradient. This subunit may bind ubiquinone. The polypeptide is NADH-quinone oxidoreductase subunit H (Burkholderia mallei (strain ATCC 23344)).